The following is a 344-amino-acid chain: MSETAVVEQPNDEVSTEKINASSVGDTIKSTELTADQKDKLEKLIGAVPEILKKTDNPKYDEIFGYCINVDTNEHVDVSIRNEILLKFLVADEYDVETAKTRLVNTLNWRNKFQPLSAAYEEEFDQELDQLGVITGNPDGNSNMKYVTWNLYGKLKNPKKVFQQYGGEGESKVGAKEGTQFLRWRIGIMEKSLSFADFTDPSNNKIAQVHDYNNVSMLRMDPNVKASTKQIISIFGANYPELLSVKFFINVPVFMGWVFSFLKKMGIISAETLKKFQVLSNGNLSEWFGKDNLPAEYNGGKSTKFSSLEALAEATPEHDIPVYAKIILAQTKDQVIEDTNLSVD.

In terms of domain architecture, CRAL-TRIO spans 139 to 305 (DGNSNMKYVT…EYNGGKSTKF (167 aa)). Heme is bound by residues Tyr-152, Arg-185, His-210, Tyr-212, and Lys-246.

Belongs to the SFH5 family. Heme b is required as a cofactor.

Its subcellular location is the cytoplasm. It is found in the endoplasmic reticulum membrane. The protein localises to the microsome membrane. The catalysed reaction is a 1,2-diacyl-sn-glycero-3-phospho-(1D-myo-inositol)(in) = a 1,2-diacyl-sn-glycero-3-phospho-(1D-myo-inositol)(out). Functionally, non-classical phosphatidylinositol (PtdIns) transfer protein (PITP), which exhibits PtdIns-binding/transfer activity in the absence of detectable PtdCho-binding/transfer activity. Regulates PtdIns(4,5)P2 homeostasis at the plasma membrane. Heme-binding protein that may play a role in organic oxidant-induced stress responses. This Debaryomyces hansenii (strain ATCC 36239 / CBS 767 / BCRC 21394 / JCM 1990 / NBRC 0083 / IGC 2968) (Yeast) protein is Phosphatidylinositol transfer protein SFH5 (SFH5).